A 173-amino-acid chain; its full sequence is NADH-ubiquinone oxidoreductase chain 6 (173 aa).

A run of 5 helical transmembrane segments spans residues 1-21, 27-47, 48-68, 87-107, and 139-159; these read MTYF…AVAS, YGVV…VNLG, VSFV…VVFV, VMGY…LGGF, and YGVG…FVVL.

Belongs to the complex I subunit 6 family.

The protein resides in the mitochondrion membrane. The enzyme catalyses a ubiquinone + NADH + 5 H(+)(in) = a ubiquinol + NAD(+) + 4 H(+)(out). Core subunit of the mitochondrial membrane respiratory chain NADH dehydrogenase (Complex I) that is believed to belong to the minimal assembly required for catalysis. Complex I functions in the transfer of electrons from NADH to the respiratory chain. The immediate electron acceptor for the enzyme is believed to be ubiquinone. This Coturnix japonica (Japanese quail) protein is NADH-ubiquinone oxidoreductase chain 6 (MT-ND6).